A 72-amino-acid polypeptide reads, in one-letter code: Protein RALF-like 36 (72 aa).

A signal peptide spans 1-27 (MGISKKTVVQSFALIIIISIVMSTTEA). 2 cysteine pairs are disulfide-bonded: C43-C51 and C63-C69.

It belongs to the plant rapid alkalinization factor (RALF) family.

It is found in the secreted. Functionally, cell signaling peptide that may regulate plant stress, growth, and development. Mediates a rapid alkalinization of extracellular space by mediating a transient increase in the cytoplasmic Ca(2+) concentration leading to a calcium-dependent signaling events through a cell surface receptor and a concomitant activation of some intracellular mitogen-activated protein kinases. This chain is Protein RALF-like 36, found in Arabidopsis thaliana (Mouse-ear cress).